The sequence spans 224 residues: 7-cyano-7-deazaguanine synthase 1 (224 aa).

An ATP-binding site is contributed by 10 to 20; it reads LSGGLDSMVCA. Positions 189, 199, 202, and 205 each coordinate Zn(2+).

It belongs to the QueC family. Zn(2+) is required as a cofactor.

It catalyses the reaction 7-carboxy-7-deazaguanine + NH4(+) + ATP = 7-cyano-7-deazaguanine + ADP + phosphate + H2O + H(+). The protein operates within purine metabolism; 7-cyano-7-deazaguanine biosynthesis. Its function is as follows. Catalyzes the ATP-dependent conversion of 7-carboxy-7-deazaguanine (CDG) to 7-cyano-7-deazaguanine (preQ(0)). The polypeptide is 7-cyano-7-deazaguanine synthase 1 (Sphingopyxis alaskensis (strain DSM 13593 / LMG 18877 / RB2256) (Sphingomonas alaskensis)).